The sequence spans 364 residues: DNA replication and repair protein RecF (364 aa).

30–37 (GDNGAGKT) serves as a coordination point for ATP.

It belongs to the RecF family.

It localises to the cytoplasm. The RecF protein is involved in DNA metabolism; it is required for DNA replication and normal SOS inducibility. RecF binds preferentially to single-stranded, linear DNA. It also seems to bind ATP. The chain is DNA replication and repair protein RecF from Stenotrophomonas maltophilia (strain K279a).